Reading from the N-terminus, the 392-residue chain is NADH-quinone oxidoreductase subunit D (392 aa).

This sequence belongs to the complex I 49 kDa subunit family. As to quaternary structure, NDH-1 is composed of 14 different subunits. Subunits NuoB, C, D, E, F, and G constitute the peripheral sector of the complex.

It is found in the cell inner membrane. The catalysed reaction is a quinone + NADH + 5 H(+)(in) = a quinol + NAD(+) + 4 H(+)(out). NDH-1 shuttles electrons from NADH, via FMN and iron-sulfur (Fe-S) centers, to quinones in the respiratory chain. The immediate electron acceptor for the enzyme in this species is believed to be ubiquinone. Couples the redox reaction to proton translocation (for every two electrons transferred, four hydrogen ions are translocated across the cytoplasmic membrane), and thus conserves the redox energy in a proton gradient. In Paramagnetospirillum magneticum (strain ATCC 700264 / AMB-1) (Magnetospirillum magneticum), this protein is NADH-quinone oxidoreductase subunit D.